The sequence spans 195 residues: Peptidyl-tRNA hydrolase (195 aa).

A tRNA-binding site is contributed by Y17. H22 acts as the Proton acceptor in catalysis. The tRNA site is built by Y68, N70, and N116.

Belongs to the PTH family. In terms of assembly, monomer.

The protein resides in the cytoplasm. It catalyses the reaction an N-acyl-L-alpha-aminoacyl-tRNA + H2O = an N-acyl-L-amino acid + a tRNA + H(+). Functionally, hydrolyzes ribosome-free peptidyl-tRNAs (with 1 or more amino acids incorporated), which drop off the ribosome during protein synthesis, or as a result of ribosome stalling. Its function is as follows. Catalyzes the release of premature peptidyl moieties from peptidyl-tRNA molecules trapped in stalled 50S ribosomal subunits, and thus maintains levels of free tRNAs and 50S ribosomes. In Shewanella sp. (strain ANA-3), this protein is Peptidyl-tRNA hydrolase.